The following is a 174-amino-acid chain: RNA pyrophosphohydrolase (174 aa).

Positions 14 to 167 (PYRPCVGLMV…KRKVYEEVVA (154 aa)) constitute a Nudix hydrolase domain. A Nudix box motif is present at residues 55–76 (GGIDKGEEPLEAAIRELYEETG).

This sequence belongs to the Nudix hydrolase family. RppH subfamily. It depends on a divalent metal cation as a cofactor.

Its function is as follows. Accelerates the degradation of transcripts by removing pyrophosphate from the 5'-end of triphosphorylated RNA, leading to a more labile monophosphorylated state that can stimulate subsequent ribonuclease cleavage. This chain is RNA pyrophosphohydrolase, found in Brucella anthropi (strain ATCC 49188 / DSM 6882 / CCUG 24695 / JCM 21032 / LMG 3331 / NBRC 15819 / NCTC 12168 / Alc 37) (Ochrobactrum anthropi).